The sequence spans 128 residues: Sulfurtransferase TusD (128 aa).

C78 serves as the catalytic Cysteine persulfide intermediate.

It belongs to the DsrE/TusD family. As to quaternary structure, heterohexamer, formed by a dimer of trimers. The hexameric TusBCD complex contains 2 copies each of TusB, TusC and TusD. The TusBCD complex interacts with TusE.

It localises to the cytoplasm. Functionally, part of a sulfur-relay system required for 2-thiolation of 5-methylaminomethyl-2-thiouridine (mnm(5)s(2)U) at tRNA wobble positions. Accepts sulfur from TusA and transfers it in turn to TusE. The chain is Sulfurtransferase TusD from Buchnera aphidicola subsp. Schizaphis graminum (strain Sg).